Here is a 276-residue protein sequence, read N- to C-terminus: Checkpoint protein HUS1B (276 aa).

It belongs to the HUS1 family. As to quaternary structure, interacts with RAD1 and RAD9B.

The chain is Checkpoint protein HUS1B (Hus1b) from Mus musculus (Mouse).